A 284-amino-acid chain; its full sequence is MEMO1 family protein STK_20620 (284 aa).

This sequence belongs to the MEMO1 family.

This chain is MEMO1 family protein STK_20620, found in Sulfurisphaera tokodaii (strain DSM 16993 / JCM 10545 / NBRC 100140 / 7) (Sulfolobus tokodaii).